Here is a 501-residue protein sequence, read N- to C-terminus: Isoflavone 3'-hydroxylase (501 aa).

The chain crosses the membrane as a helical span at residues L7–S24. A heme-binding site is contributed by C439.

The protein belongs to the cytochrome P450 family. It depends on heme as a cofactor. In terms of tissue distribution, expressed constitutively in leaves and stems, but not in roots.

The protein localises to the endoplasmic reticulum membrane. It catalyses the reaction formononetin + reduced [NADPH--hemoprotein reductase] + O2 = calycosin + oxidized [NADPH--hemoprotein reductase] + H2O + H(+). Its function is as follows. Involved in the biosynthesis of the pterocarpin phytoalexins. Acts on isoflavones with a 4'-methoxy group on the B-ring, such as biochanin A, formononetin and 2'-hydroxyformononetin. Has a low activity with daidzein and pseudobaptigenin, and no activity with the 7-O-methylated isoflavonoids isoformononetin and prunetin. This is Isoflavone 3'-hydroxylase from Medicago truncatula (Barrel medic).